The following is a 115-amino-acid chain: Small ribosomal subunit protein uS13 (115 aa).

A disordered region spans residues 92 to 115 (RRGLPVRGQNTKNNARTRKGSKRK). Basic residues predominate over residues 106–115 (ARTRKGSKRK).

The protein belongs to the universal ribosomal protein uS13 family. Part of the 30S ribosomal subunit. Forms a loose heterodimer with protein S19. Forms two bridges to the 50S subunit in the 70S ribosome.

In terms of biological role, located at the top of the head of the 30S subunit, it contacts several helices of the 16S rRNA. In the 70S ribosome it contacts the 23S rRNA (bridge B1a) and protein L5 of the 50S subunit (bridge B1b), connecting the 2 subunits; these bridges are implicated in subunit movement. Contacts the tRNAs in the A and P-sites. The polypeptide is Small ribosomal subunit protein uS13 (Lactobacillus gasseri (strain ATCC 33323 / DSM 20243 / BCRC 14619 / CIP 102991 / JCM 1131 / KCTC 3163 / NCIMB 11718 / NCTC 13722 / AM63)).